The chain runs to 301 residues: Ribonuclease H2 subunit A (301 aa).

Position 1 is an N-acetylmethionine (Met-1). The RNase H type-2 domain occupies Pro-28–Glu-251. 3 residues coordinate a divalent metal cation: Asp-34, Glu-35, and Asp-142. Thr-217 carries the post-translational modification Phosphothreonine. The span at Trp-255 to Pro-264 shows a compositional bias: acidic residues. Positions Trp-255 to Gln-284 are disordered. At Ser-258 the chain carries Phosphoserine. Residues Ser-272–Arg-282 show a composition bias toward polar residues.

It belongs to the RNase HII family. Eukaryotic subfamily. In terms of assembly, the RNase H2 complex is a heterotrimer composed of the catalytic subunit RNASEH2A and the non-catalytic subunits RNASEH2B and RNASEH2C. Mn(2+) serves as cofactor. The cofactor is Mg(2+).

The protein resides in the nucleus. It carries out the reaction Endonucleolytic cleavage to 5'-phosphomonoester.. Its function is as follows. Catalytic subunit of RNase HII, an endonuclease that specifically degrades the RNA of RNA:DNA hybrids. Participates in DNA replication, possibly by mediating the removal of lagging-strand Okazaki fragment RNA primers during DNA replication. Mediates the excision of single ribonucleotides from DNA:RNA duplexes. The polypeptide is Ribonuclease H2 subunit A (Rnaseh2a) (Mus musculus (Mouse)).